The sequence spans 426 residues: Tubby protein homolog 1 (426 aa).

The tract at residues 16–28 is required for localization to cilia in AWB sensory neurons; sequence QRKMLEDKQKQKR. Residues 19 to 39 are disordered; the sequence is MLEDKQKQKRHQSAGSVRTTS.

This sequence belongs to the TUB family. Interacts with rgb-3. As to expression, expressed in ciliated sensory neurons.

Its subcellular location is the cytoplasm. It is found in the cell projection. It localises to the axon. The protein localises to the dendrite. The protein resides in the cilium. In terms of biological role, has a role in fat regulation independent of daf-16. Implicated in ciliar sensory function which is required for normal sensory behavior such as chemotaxis. Required for extension and growth of sensory neuronal cilia during postembryonic development, potentially via mediating signaling protein transport and localization of PI(4,5)P2 to the ciliary base. Functions in life span control via the insulin/IGF-1 pathway. Thought to be involved in neuronal trafficking. This Caenorhabditis elegans protein is Tubby protein homolog 1.